A 311-amino-acid polypeptide reads, in one-letter code: Ribosomal RNA small subunit methyltransferase H (311 aa).

S-adenosyl-L-methionine-binding positions include 33-35 (AGH), Asp53, Phe80, Asp101, and Gln108.

Belongs to the methyltransferase superfamily. RsmH family.

Its subcellular location is the cytoplasm. The enzyme catalyses cytidine(1402) in 16S rRNA + S-adenosyl-L-methionine = N(4)-methylcytidine(1402) in 16S rRNA + S-adenosyl-L-homocysteine + H(+). In terms of biological role, specifically methylates the N4 position of cytidine in position 1402 (C1402) of 16S rRNA. The polypeptide is Ribosomal RNA small subunit methyltransferase H (Clostridioides difficile (strain 630) (Peptoclostridium difficile)).